The chain runs to 325 residues: Tagatose 1,6-diphosphate aldolase (325 aa).

This sequence belongs to the aldolase LacD family.

It catalyses the reaction D-tagatofuranose 1,6-bisphosphate = D-glyceraldehyde 3-phosphate + dihydroxyacetone phosphate. Its pathway is carbohydrate metabolism; D-tagatose 6-phosphate degradation; D-glyceraldehyde 3-phosphate and glycerone phosphate from D-tagatose 6-phosphate: step 2/2. The sequence is that of Tagatose 1,6-diphosphate aldolase from Staphylococcus epidermidis (strain ATCC 12228 / FDA PCI 1200).